A 632-amino-acid polypeptide reads, in one-letter code: tRNA-guanine(15) transglycosylase (632 aa).

Asp86 serves as the catalytic Nucleophile. Asp121 and Gly186 together coordinate substrate. The PUA domain maps to 553–628 (NLRVFVKNES…IAVKIHEGRD (76 aa)).

This sequence belongs to the archaeosine tRNA-ribosyltransferase family. Zn(2+) serves as cofactor.

It carries out the reaction guanosine(15) in tRNA + 7-cyano-7-deazaguanine = 7-cyano-7-carbaguanosine(15) in tRNA + guanine. It functions in the pathway tRNA modification; archaeosine-tRNA biosynthesis. Exchanges the guanine residue with 7-cyano-7-deazaguanine (preQ0) at position 15 in the dihydrouridine loop (D-loop) of archaeal tRNAs. This chain is tRNA-guanine(15) transglycosylase, found in Thermoplasma volcanium (strain ATCC 51530 / DSM 4299 / JCM 9571 / NBRC 15438 / GSS1).